A 510-amino-acid chain; its full sequence is Probable cytosol aminopeptidase (510 aa).

Residues lysine 272 and aspartate 277 each contribute to the Mn(2+) site. Lysine 284 is an active-site residue. Residues aspartate 296, aspartate 355, and glutamate 357 each contribute to the Mn(2+) site. Arginine 359 is a catalytic residue.

The protein belongs to the peptidase M17 family. It depends on Mn(2+) as a cofactor.

The protein resides in the cytoplasm. The enzyme catalyses Release of an N-terminal amino acid, Xaa-|-Yaa-, in which Xaa is preferably Leu, but may be other amino acids including Pro although not Arg or Lys, and Yaa may be Pro. Amino acid amides and methyl esters are also readily hydrolyzed, but rates on arylamides are exceedingly low.. It carries out the reaction Release of an N-terminal amino acid, preferentially leucine, but not glutamic or aspartic acids.. Presumably involved in the processing and regular turnover of intracellular proteins. Catalyzes the removal of unsubstituted N-terminal amino acids from various peptides. The protein is Probable cytosol aminopeptidase of Synechococcus sp. (strain JA-2-3B'a(2-13)) (Cyanobacteria bacterium Yellowstone B-Prime).